Reading from the N-terminus, the 184-residue chain is Protein C8 (184 aa).

Residues 1-21 (MSSIRFIACLYLISIFGNCHE) form the signal peptide.

It belongs to the poxviridae C8 protein family.

The sequence is that of Protein C8 from Vaccinia virus (strain Copenhagen) (VACV).